The following is a 314-amino-acid chain: Thymidylate synthase (314 aa).

Residues arginine 21 and 176–177 (RR) contribute to the dUMP site. Cysteine 196 functions as the Nucleophile in the catalytic mechanism. Residues 216-219 (RSAD), asparagine 227, and 257-259 (HLY) each bind dUMP. Position 219 (aspartate 219) interacts with (6R)-5,10-methylene-5,6,7,8-tetrahydrofolate. Serine 313 provides a ligand contact to (6R)-5,10-methylene-5,6,7,8-tetrahydrofolate.

Belongs to the thymidylate synthase family. Bacterial-type ThyA subfamily. Homodimer.

It is found in the cytoplasm. The catalysed reaction is dUMP + (6R)-5,10-methylene-5,6,7,8-tetrahydrofolate = 7,8-dihydrofolate + dTMP. It functions in the pathway pyrimidine metabolism; dTTP biosynthesis. Functionally, catalyzes the reductive methylation of 2'-deoxyuridine-5'-monophosphate (dUMP) to 2'-deoxythymidine-5'-monophosphate (dTMP) while utilizing 5,10-methylenetetrahydrofolate (mTHF) as the methyl donor and reductant in the reaction, yielding dihydrofolate (DHF) as a by-product. This enzymatic reaction provides an intracellular de novo source of dTMP, an essential precursor for DNA biosynthesis. The sequence is that of Thymidylate synthase from Listeria monocytogenes serovar 1/2a (strain ATCC BAA-679 / EGD-e).